Consider the following 58-residue polypeptide: Large ribosomal subunit protein bL32 (58 aa).

The protein belongs to the bacterial ribosomal protein bL32 family.

This chain is Large ribosomal subunit protein bL32, found in Carboxydothermus hydrogenoformans (strain ATCC BAA-161 / DSM 6008 / Z-2901).